We begin with the raw amino-acid sequence, 236 residues long: Small ribosomal subunit protein mS41 (236 aa).

This sequence belongs to the mitochondrion-specific ribosomal protein mS41 family. In terms of assembly, component of the mitochondrial small ribosomal subunit (mt-SSU). Mature N.crassa 74S mitochondrial ribosomes consist of a small (37S) and a large (54S) subunit. The 37S small subunit contains a 16S ribosomal RNA (16S mt-rRNA) and 32 different proteins. The 54S large subunit contains a 23S rRNA (23S mt-rRNA) and 42 different proteins.

The protein resides in the mitochondrion. In terms of biological role, component of the mitochondrial ribosome (mitoribosome), a dedicated translation machinery responsible for the synthesis of mitochondrial genome-encoded proteins, including at least some of the essential transmembrane subunits of the mitochondrial respiratory chain. The mitoribosomes are attached to the mitochondrial inner membrane and translation products are cotranslationally integrated into the membrane. In Neurospora crassa (strain ATCC 24698 / 74-OR23-1A / CBS 708.71 / DSM 1257 / FGSC 987), this protein is Small ribosomal subunit protein mS41 (fyv4).